Reading from the N-terminus, the 423-residue chain is NDP-N-acetyl-D-galactosaminuronic acid dehydrogenase (423 aa).

11-28 provides a ligand contact to NAD(+); it reads TISVVGLGYIGLPTATVL. Lys218 serves as the catalytic Proton donor/acceptor. The active-site Nucleophile is Cys272.

The protein belongs to the UDP-glucose/GDP-mannose dehydrogenase family.

Its function is as follows. Probably involved in synthesis of sugar components of EPS I, by converting NDP-N-acetyl-D-galactosamine into NDP-N-acetyl-D-galactosaminuronic acid. In Ralstonia solanacearum (Pseudomonas solanacearum), this protein is NDP-N-acetyl-D-galactosaminuronic acid dehydrogenase (epsD).